The following is a 248-amino-acid chain: UDP-2,3-diacylglucosamine hydrolase (248 aa).

5 residues coordinate Mn(2+): D7, H9, D40, N78, and H113. 78–79 (NR) serves as a coordination point for substrate. Positions 121, 159, 163, 166, and 194 each coordinate substrate. Mn(2+) is bound by residues H194 and H196.

Belongs to the LpxH family. The cofactor is Mn(2+).

It is found in the cell inner membrane. The catalysed reaction is UDP-2-N,3-O-bis[(3R)-3-hydroxytetradecanoyl]-alpha-D-glucosamine + H2O = 2-N,3-O-bis[(3R)-3-hydroxytetradecanoyl]-alpha-D-glucosaminyl 1-phosphate + UMP + 2 H(+). It functions in the pathway glycolipid biosynthesis; lipid IV(A) biosynthesis; lipid IV(A) from (3R)-3-hydroxytetradecanoyl-[acyl-carrier-protein] and UDP-N-acetyl-alpha-D-glucosamine: step 4/6. In terms of biological role, hydrolyzes the pyrophosphate bond of UDP-2,3-diacylglucosamine to yield 2,3-diacylglucosamine 1-phosphate (lipid X) and UMP by catalyzing the attack of water at the alpha-P atom. Involved in the biosynthesis of lipid A, a phosphorylated glycolipid that anchors the lipopolysaccharide to the outer membrane of the cell. The protein is UDP-2,3-diacylglucosamine hydrolase of Pseudomonas fluorescens (strain Pf0-1).